A 147-amino-acid chain; its full sequence is Lectin-like protein BA14k (147 aa).

Residues Met-1–Ala-26 form the signal peptide. Residues Gly-80–Gln-100 form a helical membrane-spanning segment.

The protein belongs to the BA14k family.

The protein localises to the cell membrane. Its function is as follows. Has immunoglobulin-binding and hemagglutination properties, and can bind to mannose. Essential for virulence. May be involved in LPS biosynthesis or polysaccharide transport. The polypeptide is Lectin-like protein BA14k (Brucella abortus (strain S19)).